Reading from the N-terminus, the 439-residue chain is Xylose isomerase (439 aa).

Residues His-101 and Asp-104 contribute to the active site. Glu-232, Glu-268, His-271, Asp-296, Asp-307, Asp-309, and Asp-339 together coordinate Mg(2+).

The protein belongs to the xylose isomerase family. In terms of assembly, homotetramer. It depends on Mg(2+) as a cofactor.

The protein resides in the cytoplasm. It carries out the reaction alpha-D-xylose = alpha-D-xylulofuranose. The sequence is that of Xylose isomerase from Histophilus somni (strain 2336) (Haemophilus somnus).